Reading from the N-terminus, the 228-residue chain is Eukaryotic translation initiation factor 4E-1 (228 aa).

Basic and acidic residues predominate over residues 1-19; that stretch reads MATAEMEKTTTFDEAEKVK. The disordered stretch occupies residues 1 to 33; it reads MATAEMEKTTTFDEAEKVKLNANEADDEVEEGE. The span at 24–33 shows a compositional bias: acidic residues; the sequence is EADDEVEEGE. 2 EIF4G-binding regions span residues 53–56 and 63–99; these read HPLE and FDNP…NNIH. MRNA contacts are provided by residues 71–76, Lys-103, and 121–122; these read KQAAWG and WE. A disulfide bond links Cys-126 and Cys-164. The interval 147 to 156 is EIF4G-binding; the sequence is YTLLAMIGHQ. MRNA contacts are provided by residues 171–176 and 216–220; these read RGKGEK and KRLDR.

Belongs to the eukaryotic initiation factor 4E family. In terms of assembly, EIF4F is a multi-subunit complex, the composition of which varies with external and internal environmental conditions. It is composed of at least EIF4A, EIF4E and EIF4G. EIF4E is also known to interact with other partners. In higher plants two isoforms of EIF4F have been identified, named isoform EIF4F and isoform EIF(iso)4F. Isoform EIF4F has subunits p220 and p26, whereas isoform EIF(iso)4F has subunits p82 and p28. (Microbial infection) Interacts with potyvirus viral genome-linked protein (VPg); this interaction is possible in susceptible hosts but is impaired in resistant plants. Thus the VPg of tobacco etch virus (TEV) strain HAT interacts with susceptible alleles pvr2(+), pvr2(3) and pvr2(9) but not with the resistant allele pvr2(2), the VPg of TEV strain CAA10 interacts with susceptible alleles pvr2(+), pvr2(2), pvr2(3) and pvr2(9), the VPg of potato virus Y (PVY) strain LYE84 interacts with tomato eIF4E1 and eIF4E2 as well as with the Capsicum annuum eIF4E1 susceptible allele pvr2(+) but not with resistant alleles pvr2(1), pvr2(2), pvr2(3), pvr2(4), pvr2(5), pvr2(6), pvr2(7), pvr2(8) and pvr2(9) and the VPg of PVY strain SON41 interacts with C.annuum eIF4E1 susceptible alleles pvr2(+), pvr2(1), pvr2(2), pvr2(3) and pvr2(4) but not with resistant alleles pvr2(5), pvr2(6), pvr2(7), pvr2(8) and pvr2(9). In addition, the susceptible allele pvr1(+) interacts strongly with TEV strains HAT and NW VPg while resistance alleles (pvr1, pvr1(1), and pvr1(2)) fail to bind TEV VPg. According to the redox status, the Cys-126-Cys-164 disulfide bridge may have a role in regulating protein function by affecting its ability to bind capped mRNA.

The protein resides in the nucleus. It is found in the cytoplasm. Functionally, component of the protein complex eIF4F, which is involved in the recognition of the mRNA cap, ATP-dependent unwinding of 5'-terminal secondary structure and recruitment of mRNA to the ribosome. Recognizes and binds the 7-methylguanosine-containing mRNA cap during an early step in the initiation of protein synthesis and facilitates ribosome binding by inducing the unwinding of the mRNAs secondary structures. Key component of recessive resistance to potyviruses. (Microbial infection) Susceptibility host factor required for viral infection (e.g. potato virus Y (PVY) and tobacco etch virus (TEV)) by recruiting viral RNAs to the host ribosomal complex via an interaction with viral genome-linked protein (VPg). The protein is Eukaryotic translation initiation factor 4E-1 of Capsicum annuum (Capsicum pepper).